The primary structure comprises 203 residues: Recombination protein RecR (203 aa).

The C4-type zinc-finger motif lies at 56–71 (CSVCGNVSDEERCRIC). One can recognise a Toprim domain in the interval 79–179 (SLVCVVEEPK…TVTRIASGLP (101 aa)).

It belongs to the RecR family.

Its function is as follows. May play a role in DNA repair. It seems to be involved in an RecBC-independent recombinational process of DNA repair. It may act with RecF and RecO. The sequence is that of Recombination protein RecR from Mycolicibacterium smegmatis (strain ATCC 700084 / mc(2)155) (Mycobacterium smegmatis).